Reading from the N-terminus, the 123-residue chain is Small ribosomal subunit protein uS8 (123 aa).

The protein belongs to the universal ribosomal protein uS8 family. In terms of assembly, part of the 30S ribosomal subunit. Contacts proteins S5 and S12.

In terms of biological role, one of the primary rRNA binding proteins, it binds directly to 16S rRNA central domain where it helps coordinate assembly of the platform of the 30S subunit. This is Small ribosomal subunit protein uS8 (rpsH) from Carsonella ruddii (strain PV).